The sequence spans 371 residues: Methionine import ATP-binding protein MetN (371 aa).

Positions 1 to 22 (MSEPFMNAPWQPPGDHPALKSP) are disordered. Residues 27-268 (ILIDSVRKLY…PRHEVTRRFV (242 aa)) enclose the ABC transporter domain. Residue 65–72 (GRSGAGKS) participates in ATP binding.

The protein belongs to the ABC transporter superfamily. Methionine importer (TC 3.A.1.24) family. As to quaternary structure, the complex is composed of two ATP-binding proteins (MetN), two transmembrane proteins (MetI) and a solute-binding protein (MetQ).

The protein resides in the cell inner membrane. It catalyses the reaction L-methionine(out) + ATP + H2O = L-methionine(in) + ADP + phosphate + H(+). The enzyme catalyses D-methionine(out) + ATP + H2O = D-methionine(in) + ADP + phosphate + H(+). Functionally, part of the ABC transporter complex MetNIQ involved in methionine import. Responsible for energy coupling to the transport system. The chain is Methionine import ATP-binding protein MetN from Rhodopseudomonas palustris (strain BisB5).